The following is a 138-amino-acid chain: Nucleoside diphosphate kinase (138 aa).

Residues Lys-9, Phe-57, Arg-85, Thr-91, Arg-102, and Asn-112 each contribute to the ATP site. The active-site Pros-phosphohistidine intermediate is the His-115.

Belongs to the NDK family. Homotetramer. It depends on Mg(2+) as a cofactor.

It is found in the cytoplasm. The catalysed reaction is a 2'-deoxyribonucleoside 5'-diphosphate + ATP = a 2'-deoxyribonucleoside 5'-triphosphate + ADP. It catalyses the reaction a ribonucleoside 5'-diphosphate + ATP = a ribonucleoside 5'-triphosphate + ADP. In terms of biological role, major role in the synthesis of nucleoside triphosphates other than ATP. The ATP gamma phosphate is transferred to the NDP beta phosphate via a ping-pong mechanism, using a phosphorylated active-site intermediate. This Deinococcus radiodurans (strain ATCC 13939 / DSM 20539 / JCM 16871 / CCUG 27074 / LMG 4051 / NBRC 15346 / NCIMB 9279 / VKM B-1422 / R1) protein is Nucleoside diphosphate kinase.